The sequence spans 802 residues: Chromosome alignment-maintaining phosphoprotein 1 (802 aa).

Methionine 1 carries the post-translational modification N-acetylmethionine. A compositionally biased stretch (basic and acidic residues) spans 88-105; sequence SDKWSEQPKEQPSKDTES. The segment at 88–475 is disordered; sequence SDKWSEQPKE…PDLWKSSFIM (388 aa). At serine 108 the chain carries Phosphoserine. Residues 135 to 148 show a composition bias toward polar residues; that stretch reads QKTSPSLCPESQAS. Residues 185 to 203 show a composition bias toward basic and acidic residues; sequence ERVDPPCELPELEKPERGP. Serine 204, serine 207, serine 234, serine 237, serine 243, serine 252, serine 254, serine 265, serine 272, serine 276, serine 298, serine 309, serine 334, serine 345, and serine 365 each carry phosphoserine. A mediates interaction with MAD2L2 region spans residues 261-479; the sequence is ARTASPEPRK…KSSFIMESQK (219 aa). Positions 332–351 are enriched in pro residues; sequence PMSPGPWKPIPSVSPGPWKP. Residues 354–368 show a composition bias toward low complexity; that stretch reads SMSTASWKSSVSSGS. Positions 369-378 are enriched in polar residues; that stretch reads WKTPPTSPES. Threonine 371 is subject to Phosphothreonine. A phosphoserine mark is found at serine 375, serine 394, serine 405, serine 416, serine 421, serine 425, serine 432, serine 434, and serine 441. Residues 440–580 are mediates localization to the spindle and the kinetochore and is required for the attachment of spindle microtubules to the kinetochore; the sequence is VSPDQRKTSP…EIQLEAVDNA (141 aa). The residue at position 447 (threonine 447) is a Phosphothreonine. 3 positions are modified to phosphoserine: serine 448, serine 451, and serine 461. Residue lysine 479 is modified to N6-acetyllysine; alternate. Residue lysine 479 forms a Glycyl lysine isopeptide (Lys-Gly) (interchain with G-Cter in SUMO2); alternate linkage. 3 positions are modified to phosphoserine: serine 497, serine 502, and serine 532. A Glycyl lysine isopeptide (Lys-Gly) (interchain with G-Cter in SUMO2) cross-link involves residue lysine 555. The interval 581 to 802 is mediates localization to the chromosome and the spindle and negatively regulates chromosome alignment; sequence KCDSLAQEGL…LESPLEEQQI (222 aa). Threonine 593 carries the phosphothreonine modification. Residue lysine 596 forms a Glycyl lysine isopeptide (Lys-Gly) (interchain with G-Cter in SUMO2) linkage. Serine 603, serine 605, serine 617, serine 622, serine 641, serine 642, and serine 643 each carry phosphoserine. The interval 603-625 is disordered; sequence SPSSKKLKKDSQENSDAELSSSE. Lysine 660 is covalently cross-linked (Glycyl lysine isopeptide (Lys-Gly) (interchain with G-Cter in SUMO2)). The residue at position 665 (serine 665) is a Phosphoserine. Lysine 679 is covalently cross-linked (Glycyl lysine isopeptide (Lys-Gly) (interchain with G-Cter in SUMO2)). Serine 726 carries the phosphoserine modification. The C2H2-type zinc finger occupies 728–750; sequence YKCTICGKAFLLESLLKNHVAAH.

In terms of assembly, interacts with MAD2L2. Interacts with POGZ, CBX1, CBX3 and CBX5. In terms of processing, phosphorylated by CDK1. Mitotic phosphorylation is required for the attachment of spindle microtubules to the kinetochore.

It localises to the nucleus. It is found in the chromosome. The protein localises to the centromere. Its subcellular location is the kinetochore. The protein resides in the cytoplasm. It localises to the cytoskeleton. It is found in the spindle. In terms of biological role, required for proper alignment of chromosomes at metaphase and their accurate segregation during mitosis. Involved in the maintenance of spindle microtubules attachment to the kinetochore during sister chromatid biorientation. May recruit CENPE and CENPF to the kinetochore. The protein is Chromosome alignment-maintaining phosphoprotein 1 (Champ1) of Mus musculus (Mouse).